Here is a 68-residue protein sequence, read N- to C-terminus: Protein RH1 (68 aa).

The polypeptide is Protein RH1 (Pantherophis guttatus (Corn snake)).